A 261-amino-acid chain; its full sequence is MARQPLIAGNWKMNLNHLEAIALVQKIAFSLPEKYFAKVEVAVIPPFTDIRSVQTLIDGDKLLLKHGAQDVSEHESGAYTGEVSGPMLAKLGCSYVVVGHSERREHHAETDEVVNRKVRAVLKHGMSPILCVGEPLEVREAGGHVEHSTTQLINALKGLKTEQIRQVVVAYEPVWAIGTGKVATAADAQEVCAALRTALADKYGKEIADEVRVLYGGSVKSSNIGELIGQNDVDGALVGGASLNGDEFTKLSAMAAGGPLP.

Substrate is bound at residue asparagine 10–lysine 12. Histidine 100 acts as the Electrophile in catalysis. Glutamate 172 functions as the Proton acceptor in the catalytic mechanism. Substrate contacts are provided by residues glycine 178, serine 218, and glycine 239–glycine 240.

It belongs to the triosephosphate isomerase family. Homodimer.

The protein localises to the cytoplasm. The catalysed reaction is D-glyceraldehyde 3-phosphate = dihydroxyacetone phosphate. Its pathway is carbohydrate biosynthesis; gluconeogenesis. It functions in the pathway carbohydrate degradation; glycolysis; D-glyceraldehyde 3-phosphate from glycerone phosphate: step 1/1. Its function is as follows. Involved in the gluconeogenesis. Catalyzes stereospecifically the conversion of dihydroxyacetone phosphate (DHAP) to D-glyceraldehyde-3-phosphate (G3P). The chain is Triosephosphate isomerase from Saccharopolyspora erythraea (strain ATCC 11635 / DSM 40517 / JCM 4748 / NBRC 13426 / NCIMB 8594 / NRRL 2338).